We begin with the raw amino-acid sequence, 53 residues long: Reg12l (53 aa).

Positions 1–34 (RVLFRSGDQPADQPAERMQDISPEQNPLFHPDKR) are excised as a propeptide. 3 cysteine pairs are disulfide-bonded: Cys36-Cys50, Cys37-Cys48, and Cys42-Cys51.

Belongs to the conotoxin M superfamily. In terms of tissue distribution, expressed by the venom duct.

Its subcellular location is the secreted. The polypeptide is Reg12l (Conus regius (Crown cone)).